The following is a 546-amino-acid chain: CTP synthase (546 aa).

The tract at residues 1 to 266 (MTTRYIFVTG…DELVVKRFSL (266 aa)) is amidoligase domain. Ser-14 serves as a coordination point for CTP. Position 14 (Ser-14) interacts with UTP. Residues 15–20 (SLGKGI) and Asp-72 contribute to the ATP site. 2 residues coordinate Mg(2+): Asp-72 and Glu-140. CTP is bound by residues 147-149 (DIE), 187-192 (KTKPTQ), and Lys-223. UTP-binding positions include 187 to 192 (KTKPTQ) and Lys-223. ATP is bound at residue 239–241 (KDV). In terms of domain architecture, Glutamine amidotransferase type-1 spans 291–542 (VIGMVGKYIE…VAAASAHQKR (252 aa)). Gly-352 lines the L-glutamine pocket. Cys-379 (nucleophile; for glutamine hydrolysis) is an active-site residue. L-glutamine is bound by residues 380–383 (LGMQ), Glu-403, and Arg-470. Active-site residues include His-515 and Glu-517.

This sequence belongs to the CTP synthase family. As to quaternary structure, homotetramer.

The catalysed reaction is UTP + L-glutamine + ATP + H2O = CTP + L-glutamate + ADP + phosphate + 2 H(+). It carries out the reaction L-glutamine + H2O = L-glutamate + NH4(+). It catalyses the reaction UTP + NH4(+) + ATP = CTP + ADP + phosphate + 2 H(+). The protein operates within pyrimidine metabolism; CTP biosynthesis via de novo pathway; CTP from UDP: step 2/2. Allosterically activated by GTP, when glutamine is the substrate; GTP has no effect on the reaction when ammonia is the substrate. The allosteric effector GTP functions by stabilizing the protein conformation that binds the tetrahedral intermediate(s) formed during glutamine hydrolysis. Inhibited by the product CTP, via allosteric rather than competitive inhibition. Its function is as follows. Catalyzes the ATP-dependent amination of UTP to CTP with either L-glutamine or ammonia as the source of nitrogen. Regulates intracellular CTP levels through interactions with the four ribonucleotide triphosphates. In Shewanella oneidensis (strain ATCC 700550 / JCM 31522 / CIP 106686 / LMG 19005 / NCIMB 14063 / MR-1), this protein is CTP synthase.